A 499-amino-acid polypeptide reads, in one-letter code: Interferon regulatory factor 5 (499 aa).

The Nuclear localization signal motif lies at 12–18; that stretch reads PRRVRLK. The IRF tryptophan pentad repeat DNA-binding region spans 14 to 122; the sequence is RVRLKPWLVA…QPYKVYEVCS (109 aa). The segment at 121 to 142 is disordered; it reads CSNGPAPAESQPSEDNAEEEEE. The short motif at 145–155 is the Nuclear export signal element; sequence LQKMLPGLSIT. Ser153 and Ser294 each carry phosphoserine; by TBK1. Ser302 carries the post-translational modification Phosphoserine. Glycyl lysine isopeptide (Lys-Gly) (interchain with G-Cter in ubiquitin) cross-links involve residues Lys412 and Lys413. Phosphoserine occurs at positions 432, 436, 438, 441, and 447.

Belongs to the IRF family. Homodimer, when phosphorylated. Interacts with TASL (via pLxIS motif); interaction takes place downstream of TLR7, TLR8 or TLR9, leading to its activation. Interacts with MYD88 and TRAF6. Phosphorylation of serine and threonine residues by IKBKB in a C-terminal autoinhibitory region, stimulates dimerization, transport into the nucleus, assembly with the coactivator CBP/EP300 and initiation of transcription. In terms of processing, 'Lys-63'-linked polyubiquitination by TRAF6 is required for activation.

It is found in the cytoplasm. It localises to the nucleus. With respect to regulation, maintained as a monomer in an autoinhibited state. Phosphorylation and activation follow the following steps: innate adapter protein TASL recruits IRF5, thereby licensing IRF5 for phosphorylation by IKBKB. Phosphorylated IRF5 dissociates from the adapter proteins, dimerizes, and then enters the nucleus to induce IFNs. Functionally, transcription factor that plays a critical role in innate immunity by activating expression of type I interferon (IFN) IFNA and INFB and inflammatory cytokines downstream of endolysosomal toll-like receptors TLR7, TLR8 and TLR9. Regulates the transcription of type I IFN genes (IFN-alpha and IFN-beta) and IFN-stimulated genes (ISG) by binding to an interferon-stimulated response element (ISRE) in their promoters. Can efficiently activate both the IFN-beta (IFNB) and the IFN-alpha (IFNA) genes and mediate their induction downstream of the TLR-activated, MyD88-dependent pathway. The protein is Interferon regulatory factor 5 of Bos taurus (Bovine).